The sequence spans 2128 residues: Spectrin beta chain, erythrocytic (2128 aa).

The segment covering 1-15 (MTSATEFENVGNQPP) has biased composition (polar residues). The segment at 1 to 30 (MTSATEFENVGNQPPFSRINARWDAPDDEL) is disordered. An actin-binding region spans residues 2–275 (TSATEFENVG…IITYVVAFYH (274 aa)). At Ser36 the chain carries Phosphoserine. 2 Calponin-homology (CH) domains span residues 54–158 (VVQK…LRFQ) and 173–278 (RSAK…HYFS). Thr104 carries the phosphothreonine modification. Spectrin repeat units lie at residues 303–411 (MIEK…LALR), 416–517 (RQEF…QRLE), 521–627 (ALQK…QLEQ), 630–733 (RLWK…DLQD), 736–838 (NFFQ…KLQE), 845–942 (VFGE…REAV), 950–1050 (NYCV…LSLG), 1054–1157 (KLQA…NTLT), 1162–1250 (FQEF…RHKK), 1267–1368 (ELQN…EQLS), 1381–1455 (ADLN…FLDL), 1473–1574 (LQIS…RLRD), 1576–1680 (HEAQ…RLEN), 1682–1784 (YHLF…MQLL), 1789–1890 (DLHR…RAQL), 1897–1997 (FRFF…DRLH), and 2004–2064 (QFSR…KPTT). A Phosphoserine modification is found at Ser1289. Phosphoserine is present on Ser2034. Positions 2062–2108 (PTTLELKERQTPERPTEEPGPQEEEGETAGEAPQVHHAATERTSPVS) are disordered. A phosphothreonine mark is found at Thr2064, Thr2072, and Thr2101. Positions 2066–2078 (ELKERQTPERPTE) are enriched in basic and acidic residues. Ser2105, Ser2108, Ser2114, Ser2116, and Ser2119 each carry phosphoserine.

This sequence belongs to the spectrin family. In terms of assembly, composed of nonhomologous chains, alpha and beta, which aggregate to form dimers, tetramers, and higher polymers. Interacts with BCAM.

The protein resides in the cytoplasm. It is found in the cytoskeleton. It localises to the cell cortex. Spectrin is the major constituent of the cytoskeletal network underlying the erythrocyte plasma membrane. It associates with band 4.1 and actin to form the cytoskeletal superstructure of the erythrocyte plasma membrane. The protein is Spectrin beta chain, erythrocytic (Sptb) of Mus musculus (Mouse).